A 424-amino-acid polypeptide reads, in one-letter code: Anaerobic glycerol-3-phosphate dehydrogenase subunit B (424 aa).

The protein belongs to the anaerobic G-3-P dehydrogenase subunit B family. Composed of a catalytic GlpA/B dimer and of membrane bound GlpC. FMN is required as a cofactor.

The catalysed reaction is a quinone + sn-glycerol 3-phosphate = dihydroxyacetone phosphate + a quinol. The protein operates within polyol metabolism; glycerol degradation via glycerol kinase pathway; glycerone phosphate from sn-glycerol 3-phosphate (anaerobic route): step 1/1. Functionally, conversion of glycerol 3-phosphate to dihydroxyacetone. Uses fumarate or nitrate as electron acceptor. This Yersinia pestis bv. Antiqua (strain Antiqua) protein is Anaerobic glycerol-3-phosphate dehydrogenase subunit B.